The sequence spans 99 residues: MCAPTSDDPFDIPEPKSIPAKTAASAVRFYQKYLSGLKMGSTCRFDPVCSTYALKAVSVHGAFKGTILSAARLSKCGPWHPGGFDPVPNHGFWSTETVT.

Belongs to the UPF0161 family.

Its subcellular location is the cell membrane. Its function is as follows. Could be involved in insertion of integral membrane proteins into the membrane. The polypeptide is Putative membrane protein insertion efficiency factor (Corynebacterium glutamicum (strain ATCC 13032 / DSM 20300 / JCM 1318 / BCRC 11384 / CCUG 27702 / LMG 3730 / NBRC 12168 / NCIMB 10025 / NRRL B-2784 / 534)).